A 280-amino-acid polypeptide reads, in one-letter code: Protein phosphatase 1 regulatory subunit 3B-A (280 aa).

The PP1-binding motif motif lies at 58-61 (RVSF). Residues 121-229 (RNRLQADSVC…SNKSLNYKIA (109 aa)) enclose the CBM21 domain.

In terms of assembly, interacts with glycogen, PPP1CC catalytic subunit of PP1 and PYGL. Associates with glycogen particles. Forms complexes with debranching enzyme, glycogen phosphorylase, glycogen synthase and phosphorylase kinase which is necessary for its regulation of PP1 activity.

Acts as a glycogen-targeting subunit for phosphatase PP1. Facilitates interaction of the PP1 with enzymes of the glycogen metabolism and regulates its activity. Suppresses the rate at which PP1 dephosphorylates (inactivates) glycogen phosphorylase and enhances the rate at which it activates glycogen synthase and therefore limits glycogen breakdown. In Xenopus laevis (African clawed frog), this protein is Protein phosphatase 1 regulatory subunit 3B-A (ppp1r3b-a).